Here is a 439-residue protein sequence, read N- to C-terminus: Synaptotagmin-B (439 aa).

Residues 1–74 lie on the Vesicular side of the membrane; that stretch reads MQAEMNQSAE…KEKFMNELQK (74 aa). 2 N-linked (GlcNAc...) asparagine glycosylation sites follow: Asn-6 and Asn-46. Residues 75–101 form a helical membrane-spanning segment; it reads IPLPPWALIAIAIVSGLLLLTCCLCIC. Over 102-439 the chain is Cytoplasmic; it reads KKCCCKKKKN…EVDVALGLKK (338 aa). The disordered stretch occupies residues 113-155; that stretch reads KEKGKGKKNDINMKDVKGSGGNQDDDDAETGLTEGEDKEEEAK. Positions 119-129 are enriched in basic and acidic residues; the sequence is KKNDINMKDVK. Residues 135 to 151 are compositionally biased toward acidic residues; that stretch reads QDDDDAETGLTEGEDKE. The tract at residues 153–399 is phospholipid binding; that stretch reads EAKEEEKLGK…AIGKIFVGSN (247 aa). 2 C2 domains span residues 159–278 and 290–423; these read KLGK…EEWR and KLGD…AQWH. Leu-189, Asp-190, Asp-196, Asp-248, Phe-249, Asp-250, Ser-253, Lys-254, Asp-256, Asp-321, Asp-327, Asp-381, Asp-383, and Asp-389 together coordinate Ca(2+).

It belongs to the synaptotagmin family. In terms of assembly, homodimer or homotrimer (possible). The cofactor is Ca(2+). Spinal cord, brainstem, midbrain and electric organ.

Its subcellular location is the cytoplasmic vesicle. The protein localises to the secretory vesicle. It localises to the synaptic vesicle membrane. It is found in the synapse. Functionally, may have a regulatory role in the membrane interactions during trafficking of synaptic vesicles at the active zone of the synapse. It binds acidic phospholipids with a specificity that requires the presence of both an acidic head group and a diacyl backbone. This chain is Synaptotagmin-B (P65-B), found in Diplobatis ommata (Ocellated electric ray).